A 266-amino-acid polypeptide reads, in one-letter code: Small ribosomal subunit protein uS3 (266 aa).

The KH type-2 domain occupies V39–R107. Positions E218–E266 are disordered. Composition is skewed to basic and acidic residues over residues R230 to E241 and G257 to E266.

This sequence belongs to the universal ribosomal protein uS3 family. Part of the 30S ribosomal subunit. Forms a tight complex with proteins S10 and S14.

Functionally, binds the lower part of the 30S subunit head. Binds mRNA in the 70S ribosome, positioning it for translation. This is Small ribosomal subunit protein uS3 from Burkholderia multivorans (strain ATCC 17616 / 249).